Consider the following 327-residue polypeptide: L-lactate dehydrogenase (327 aa).

Residues Val18, Asp39, Lys44, Tyr69, and 83–84 (GA) contribute to the NAD(+) site. Residues Gln86, Arg92, and 124-127 (NPVD) each bind substrate. NAD(+) contacts are provided by residues 122 to 124 (AAN) and Ser147. 152–155 (DSAR) serves as a coordination point for substrate. Beta-D-fructose 1,6-bisphosphate is bound by residues Arg157 and His172. The Proton acceptor role is filled by His179. Tyr224 is subject to Phosphotyrosine. Thr233 lines the substrate pocket.

It belongs to the LDH/MDH superfamily. LDH family. As to quaternary structure, homotetramer.

The protein localises to the cytoplasm. The enzyme catalyses (S)-lactate + NAD(+) = pyruvate + NADH + H(+). Its pathway is fermentation; pyruvate fermentation to lactate; (S)-lactate from pyruvate: step 1/1. Allosterically activated by fructose 1,6-bisphosphate (FBP). Its function is as follows. Catalyzes the conversion of lactate to pyruvate. The protein is L-lactate dehydrogenase of Streptococcus pyogenes serotype M3 (strain SSI-1).